Consider the following 412-residue polypeptide: Protein BTN1 (412 aa).

The N-terminal stretch at 1–29 (MDRRKLIFGKFWLFGLLNNVLYVVILAAA) is a signal peptide. 9 helical membrane-spanning segments follow: residues 41–61 (LILL…PFFI), 70–90 (IWSL…GRLG), 91–111 (VCIV…ITFL), 131–151 (GAGL…KIPV), 154–174 (SLLL…LQVE), 234–254 (VLVV…YLIN), 281–300 (IYVA…RSSG), 307–329 (GLYL…SWYY), and 334–356 (VWVI…VNSF).

Belongs to the battenin family.

It is found in the vacuole membrane. Its function is as follows. Involved in vacuolar transport and vacuole pH homeostasis. Also required for cytokinesis. This Eremothecium gossypii (strain ATCC 10895 / CBS 109.51 / FGSC 9923 / NRRL Y-1056) (Yeast) protein is Protein BTN1 (BTN1).